Here is a 203-residue protein sequence, read N- to C-terminus: Glycerol-3-phosphate acyltransferase (203 aa).

A run of 4 helical transmembrane segments spans residues 7–27, 82–102, 118–138, and 141–161; these read TLLM…VLVC, AVSL…PVFF, APIG…LLLI, and YSSL…WWLD.

Belongs to the PlsY family. Probably interacts with PlsX.

It localises to the cell inner membrane. It catalyses the reaction an acyl phosphate + sn-glycerol 3-phosphate = a 1-acyl-sn-glycero-3-phosphate + phosphate. It functions in the pathway lipid metabolism; phospholipid metabolism. Functionally, catalyzes the transfer of an acyl group from acyl-phosphate (acyl-PO(4)) to glycerol-3-phosphate (G3P) to form lysophosphatidic acid (LPA). This enzyme utilizes acyl-phosphate as fatty acyl donor, but not acyl-CoA or acyl-ACP. The sequence is that of Glycerol-3-phosphate acyltransferase from Shewanella baltica (strain OS223).